An 838-amino-acid chain; its full sequence is Ribonucleoside-diphosphate reductase large subunit (838 aa).

Residues 6–97 form the ATP-cone domain; sequence KLVTKRDGSV…VTALHKTTTE (92 aa). ATP is bound by residues 10 to 11, 16 to 22, T58, and D62; these read KR and EPYDEKV. Residue S227 coordinates GDP. A disulfide bond links C228 and C454. Residues 236–238, K253, R266, and 273–274 each bind dTTP; these read DSI and AG. A GDP-binding site is contributed by N437. The Proton acceptor role is filled by N437. The active-site Cysteine radical intermediate is the C439. GDP-binding positions include E441 and 626–629; that span reads TAST. The Proton acceptor role is filled by E441. The segment covering 780–794 has biased composition (basic and acidic residues); the sequence is KELPKPDKQSKEEVH. Residues 780–838 are disordered; that stretch reads KELPKPDKQSKEEVHGSVGRGKRKRVGEKPTANHSNAGAPNLNGPPDTDGDGGCLNCGS.

This sequence belongs to the ribonucleoside diphosphate reductase large chain family. In terms of assembly, heterodimer of a large and a small subunit.

It catalyses the reaction a 2'-deoxyribonucleoside 5'-diphosphate + [thioredoxin]-disulfide + H2O = a ribonucleoside 5'-diphosphate + [thioredoxin]-dithiol. It carries out the reaction dCDP + [thioredoxin]-disulfide + H2O = CDP + [thioredoxin]-dithiol. Under complex allosteric control mediated by deoxynucleoside triphosphates and ATP binding to separate specificity and activation sites on the large subunit. The type of nucleotide bound at the specificity site determines substrate preference. It seems probable that ATP makes the enzyme reduce CDP and UDP, dGTP favors ADP reduction and dTTP favors GDP reduction. Stimulated by ATP and inhibited by dATP binding to the activity site. Functionally, provides the precursors necessary for DNA synthesis. Catalyzes the rate limiting step in the de novo synthesis of deoxyribonucleotides by directly reducing ribonucleotides to the corresponding deoxyribonucleotides. The protein is Ribonucleoside-diphosphate reductase large subunit (RNR1) of Trypanosoma brucei brucei.